A 528-amino-acid chain; its full sequence is Na(+)/H(+) antiporter NhaB (528 aa).

Helical transmembrane passes span 10–30 (IGNF…SFLI), 63–83 (YPLQ…MTSA), 96–116 (VLLL…LLLF), 131–165 (VSLM…FYAI), 204–224 (LLMH…VGEP), 240–260 (FVIR…LTCL), 305–325 (VLVG…VGLV), 359–379 (LAVF…APVI), 391–411 (LVIF…VFVG), 449–469 (ATPN…APLI), and 476–496 (MVWM…LAIE).

The protein belongs to the NhaB Na(+)/H(+) (TC 2.A.34) antiporter family.

The protein resides in the cell inner membrane. It carries out the reaction 2 Na(+)(in) + 3 H(+)(out) = 2 Na(+)(out) + 3 H(+)(in). Functionally, na(+)/H(+) antiporter that extrudes sodium in exchange for external protons. In Shewanella putrefaciens (strain CN-32 / ATCC BAA-453), this protein is Na(+)/H(+) antiporter NhaB.